The chain runs to 30 residues: L-serine dehydratase, alpha chain (30 aa).

This sequence belongs to the iron-sulfur dependent L-serine dehydratase family. Heterodimer of an alpha chain and a beta chain. The cofactor is [4Fe-4S] cluster.

It carries out the reaction L-serine = pyruvate + NH4(+). It participates in carbohydrate biosynthesis; gluconeogenesis. This Anaerotignum propionicum (Clostridium propionicum) protein is L-serine dehydratase, alpha chain.